The chain runs to 305 residues: Acetaldehyde dehydrogenase (305 aa).

13–16 contributes to the NAD(+) binding site; that stretch reads SGNI. C128 functions as the Acyl-thioester intermediate in the catalytic mechanism. NAD(+) is bound by residues 159 to 167 and N278; that span reads SAGPGTRQN.

The protein belongs to the acetaldehyde dehydrogenase family.

The catalysed reaction is acetaldehyde + NAD(+) + CoA = acetyl-CoA + NADH + H(+). This Chloroflexus aurantiacus (strain ATCC 29366 / DSM 635 / J-10-fl) protein is Acetaldehyde dehydrogenase.